The sequence spans 435 residues: GTPase Obg (435 aa).

An Obg domain is found at 1 to 158 (MFLDTAKVSV…RQLELELKIL (158 aa)). The region spanning 159 to 336 (ADVGLVGFPS…LLEATAELLA (178 aa)) is the OBG-type G domain. Residues 165–172 (GFPSVGKS), 190–194 (FTTIV), 212–215 (DLPG), 282–285 (NKMD), and 317–319 (SSL) each bind GTP. 2 residues coordinate Mg(2+): serine 172 and threonine 192. Residues 357–435 (GFAAEEKAFE…IGKFEFEFVD (79 aa)) enclose the OCT domain.

It belongs to the TRAFAC class OBG-HflX-like GTPase superfamily. OBG GTPase family. Monomer. It depends on Mg(2+) as a cofactor.

It localises to the cytoplasm. In terms of biological role, an essential GTPase which binds GTP, GDP and possibly (p)ppGpp with moderate affinity, with high nucleotide exchange rates and a fairly low GTP hydrolysis rate. Plays a role in control of the cell cycle, stress response, ribosome biogenesis and in those bacteria that undergo differentiation, in morphogenesis control. The chain is GTPase Obg from Streptococcus equi subsp. zooepidemicus (strain MGCS10565).